The chain runs to 555 residues: Adenine deaminase (555 aa).

It belongs to the metallo-dependent hydrolases superfamily. Adenine deaminase family. Mn(2+) is required as a cofactor.

It catalyses the reaction adenine + H2O + H(+) = hypoxanthine + NH4(+). In Methanosarcina mazei (strain ATCC BAA-159 / DSM 3647 / Goe1 / Go1 / JCM 11833 / OCM 88) (Methanosarcina frisia), this protein is Adenine deaminase.